An 846-amino-acid chain; its full sequence is MAEITVGQLAQQTNKEVDALLKQLKSFGIEKSSEKDTLTPTEMKTLLEKINSAKNTATRKKVTSVKLDGKHKINVSVKRKRRVAKKMEQQESTTLEQPQELETMVQEVSQQVDIVKEQDNIEQIVENKEAVKVQEQRQAEIAKPVIKDSGFKITAMPEIKIEEIVAEDDEGLAASDKQAKKKAAKKVFSEAVNTNTKYKREEEEKKSKAKKAGGKGFKKANPRQLSQLAGDLESFDEFGAKKGKLKAPKVKKQEFTKPVENTVRTVEIHEGITVSELAQKMAVKGAEIVKVLFNMGVMATINQSLDQDTAILIVEEMGHKYTLHNENALEEAVTIVDRSSYKKISRAPVVTIMGHVDHGKTSLLDYIRQTRVVAGEAGGITQHIGAYSVKTDKGSITFLDTPGHEAFTSMRARGAKSTDIVILVVAADDGVMPQTEEAIQHAKAARVPIVVAVNKIDKPEADSDKVISELAQRNVIPESWGGDVMFVNVSAKTGEGVADLLEAVLLQSEVLELEAFAEGLAEGVVIESRLEKGRGPVATVLVQNGNLKQGDNILCGTEYGRVRAMHNDLGKKIKAAGPATPVEILGLSGVPAAGDEMVVIENEKKAKELAAQRSQKQKEAKIAQEQSLKLSNMFNNMGKEGEQQVLKIILKGDVQGSVEAIRESLLKLSTDEVKVDIIASGIGAITSSDVTLAVASTAVVIGFNVRADSAAKKLAETDGVEFRYYNIIYDLIDDVKKAMSGLLSPEMKEQIIGIAEVREVYRSSKFGSIAGCMVIEGVVKRTNPIRVLRNNVVIYEGTLESLKRFKDDASEVKKGLECGIGVKNYNDVREGDQIEVFEVIEVAKEL.

Residues 198–219 (YKREEEEKKSKAKKAGGKGFKK) form a disordered region. The segment covering 207 to 219 (SKAKKAGGKGFKK) has biased composition (basic residues). The region spanning 345 to 512 (SRAPVVTIMG…AVLLQSEVLE (168 aa)) is the tr-type G domain. Residues 354–361 (GHVDHGKT) form a G1 region. A GTP-binding site is contributed by 354–361 (GHVDHGKT). The segment at 379 to 383 (GITQH) is G2. The tract at residues 400 to 403 (DTPG) is G3. GTP is bound by residues 400 to 404 (DTPGH) and 454 to 457 (NKID). The G4 stretch occupies residues 454-457 (NKID). The segment at 490–492 (SAK) is G5.

Belongs to the TRAFAC class translation factor GTPase superfamily. Classic translation factor GTPase family. IF-2 subfamily.

It localises to the cytoplasm. Its function is as follows. One of the essential components for the initiation of protein synthesis. Protects formylmethionyl-tRNA from spontaneous hydrolysis and promotes its binding to the 30S ribosomal subunits. Also involved in the hydrolysis of GTP during the formation of the 70S ribosomal complex. This Francisella tularensis subsp. holarctica (strain OSU18) protein is Translation initiation factor IF-2.